Reading from the N-terminus, the 313-residue chain is tRNA uridine(34) hydroxylase (313 aa).

The Rhodanese domain maps to S127–S225. C185 (cysteine persulfide intermediate) is an active-site residue.

The protein belongs to the TrhO family.

The catalysed reaction is uridine(34) in tRNA + AH2 + O2 = 5-hydroxyuridine(34) in tRNA + A + H2O. Functionally, catalyzes oxygen-dependent 5-hydroxyuridine (ho5U) modification at position 34 in tRNAs. The polypeptide is tRNA uridine(34) hydroxylase (Gluconobacter oxydans (strain 621H) (Gluconobacter suboxydans)).